Reading from the N-terminus, the 198-residue chain is UPF0312 protein PFL_5802 (198 aa).

The N-terminal stretch at 1–23 is a signal peptide; it reads MLKKTLAALAIGSAVLAAGQVMA.

The protein belongs to the UPF0312 family. Type 1 subfamily.

The protein localises to the periplasm. The protein is UPF0312 protein PFL_5802 of Pseudomonas fluorescens (strain ATCC BAA-477 / NRRL B-23932 / Pf-5).